Here is a 403-residue protein sequence, read N- to C-terminus: Keratin, type I cytoskeletal 19 (403 aa).

The head stretch occupies residues 1–82 (MTSYSYRQSS…TVTDGLLGGN (82 aa)). An Omega-N-methylarginine modification is found at Arg-7. A Phosphoserine modification is found at Ser-14. Asymmetric dimethylarginine; alternate is present on Arg-24. The residue at position 24 (Arg-24) is an Omega-N-methylarginine; alternate. The residue at position 27 (Ser-27) is a Phosphoserine. Arg-32 is modified (omega-N-methylarginine). Ser-35 and Ser-40 each carry phosphoserine. Arg-43 and Arg-51 each carry omega-N-methylarginine. Ser-57 and Ser-67 each carry phosphoserine. Positions 83 to 118 (EKITMQNLNDRLASYLDKVRALEQANGELEVKIRDW) are coil 1A. An IF rod domain is found at 83 to 394 (EKITMQNLND…SLLEGQEAHY (312 aa)). The interval 119 to 136 (YQKQGPGPFRDYSQYFKT) is linker 1. The segment at 137–228 (IEDLRDKILG…KNHEEEISAL (92 aa)) is coil 1B. A linker 12 region spans residues 229–251 (RSQVGGQVSVEVDSTPGIDLAKI). Positions 247–393 (DLAKILSEMR…RSLLEGQEAH (147 aa)) are necessary for interaction with PNN. A coil 2 region spans residues 252–390 (LSEMRSQYEA…ATYRSLLEGQ (139 aa)). Thr-326 is modified (phosphothreonine). The tract at residues 391-403 (EAHYNSLSIAKAL) is rod-like helical tail. Tyr-394 carries the post-translational modification Phosphotyrosine. Ser-398 is subject to Phosphoserine.

This sequence belongs to the intermediate filament family. As to quaternary structure, heterotetramer of two type I and two type II keratins. Interacts with PNN. Interacts with the actin-binding domain of DMD. As to expression, expressed in brain, heart, skin and in costameres of myoplasm at the sarcolemmal membrane in skeletal and cardiac muscle fibers. Undifferentiated gonads and somatic cells of ovarian cords throughout the fetal ovary development.

Its function is as follows. Involved in the organization of myofibers. Together with KRT8, helps to link the contractile apparatus to dystrophin at the costameres of striated muscle. The polypeptide is Keratin, type I cytoskeletal 19 (Krt19) (Rattus norvegicus (Rat)).